Reading from the N-terminus, the 453-residue chain is UDP-glycosyltransferase 79B6 (453 aa).

UDP-alpha-D-glucose-binding positions include Ser266, 325 to 327 (VQQ), 342 to 350 (HCGFGSMWE), and 364 to 367 (LGEQ).

Belongs to the UDP-glycosyltransferase family.

The polypeptide is UDP-glycosyltransferase 79B6 (UGT79B6) (Arabidopsis thaliana (Mouse-ear cress)).